The sequence spans 628 residues: Biosynthetic arginine decarboxylase (628 aa).

An N6-(pyridoxal phosphate)lysine modification is found at Lys99. 279–289 lines the substrate pocket; sequence VDVGGGLGIDY.

This sequence belongs to the Orn/Lys/Arg decarboxylase class-II family. SpeA subfamily. The cofactor is Mg(2+). Pyridoxal 5'-phosphate is required as a cofactor.

It carries out the reaction L-arginine + H(+) = agmatine + CO2. Functionally, catalyzes the biosynthesis of agmatine from arginine. The polypeptide is Biosynthetic arginine decarboxylase (Xanthomonas campestris pv. campestris (strain ATCC 33913 / DSM 3586 / NCPPB 528 / LMG 568 / P 25)).